Here is a 229-residue protein sequence, read N- to C-terminus: NAD(P)H-quinone oxidoreductase subunit K, chloroplastic (229 aa).

Positions 43, 44, 108, and 139 each coordinate [4Fe-4S] cluster.

Belongs to the complex I 20 kDa subunit family. As to quaternary structure, NDH is composed of at least 16 different subunits, 5 of which are encoded in the nucleus. [4Fe-4S] cluster serves as cofactor.

The protein resides in the plastid. The protein localises to the chloroplast thylakoid membrane. The catalysed reaction is a plastoquinone + NADH + (n+1) H(+)(in) = a plastoquinol + NAD(+) + n H(+)(out). It catalyses the reaction a plastoquinone + NADPH + (n+1) H(+)(in) = a plastoquinol + NADP(+) + n H(+)(out). Its function is as follows. NDH shuttles electrons from NAD(P)H:plastoquinone, via FMN and iron-sulfur (Fe-S) centers, to quinones in the photosynthetic chain and possibly in a chloroplast respiratory chain. The immediate electron acceptor for the enzyme in this species is believed to be plastoquinone. Couples the redox reaction to proton translocation, and thus conserves the redox energy in a proton gradient. This is NAD(P)H-quinone oxidoreductase subunit K, chloroplastic from Coffea arabica (Arabian coffee).